The sequence spans 218 residues: Dehydration-responsive element-binding protein 1B (218 aa).

The segment at M1–R26 is disordered. Residues V32–A95 constitute a DNA-binding region (AP2/ERF). Residues S131–N151 are disordered. The segment covering F141 to N151 has biased composition (acidic residues).

Belongs to the AP2/ERF transcription factor family. ERF subfamily.

Its subcellular location is the nucleus. Functionally, transcriptional activator that binds specifically to the DNA sequence 5'-[AG]CCGAC-3'. Binding to the C-repeat/DRE element mediates high salinity- and dehydration-inducible transcription. Confers resistance to high salt, cold and drought stress. The protein is Dehydration-responsive element-binding protein 1B (DREB1B) of Oryza sativa subsp. indica (Rice).